The chain runs to 270 residues: ATP synthase subunit a (270 aa).

A run of 5 helical transmembrane segments spans residues 38–58, 98–118, 143–163, 208–228, and 239–259; these read VHID…GIFY, IAPL…MDLV, DVNI…YYSI, LFGN…MLPW, and AIFH…LTIV.

It belongs to the ATPase A chain family. As to quaternary structure, F-type ATPases have 2 components, CF(1) - the catalytic core - and CF(0) - the membrane proton channel. CF(1) has five subunits: alpha(3), beta(3), gamma(1), delta(1), epsilon(1). CF(0) has three main subunits: a(1), b(2) and c(9-12). The alpha and beta chains form an alternating ring which encloses part of the gamma chain. CF(1) is attached to CF(0) by a central stalk formed by the gamma and epsilon chains, while a peripheral stalk is formed by the delta and b chains.

It is found in the cell inner membrane. In terms of biological role, key component of the proton channel; it plays a direct role in the translocation of protons across the membrane. In Vibrio alginolyticus, this protein is ATP synthase subunit a.